A 390-amino-acid chain; its full sequence is Queuine tRNA-ribosyltransferase (390 aa).

The active-site Proton acceptor is aspartate 90. Substrate-binding positions include 90–94, aspartate 144, glutamine 197, and glycine 224; that span reads DSGGF. An RNA binding region spans residues 255–261; the sequence is GVGTPED. The Nucleophile role is filled by aspartate 274. Residues 279-283 are RNA binding; important for wobble base 34 recognition; it reads TRNAR. Cysteine 312, cysteine 314, cysteine 317, and histidine 354 together coordinate Zn(2+).

The protein belongs to the queuine tRNA-ribosyltransferase family. Homodimer. Within each dimer, one monomer is responsible for RNA recognition and catalysis, while the other monomer binds to the replacement base PreQ1. The cofactor is Zn(2+).

It catalyses the reaction 7-aminomethyl-7-carbaguanine + guanosine(34) in tRNA = 7-aminomethyl-7-carbaguanosine(34) in tRNA + guanine. It functions in the pathway tRNA modification; tRNA-queuosine biosynthesis. Catalyzes the base-exchange of a guanine (G) residue with the queuine precursor 7-aminomethyl-7-deazaguanine (PreQ1) at position 34 (anticodon wobble position) in tRNAs with GU(N) anticodons (tRNA-Asp, -Asn, -His and -Tyr). Catalysis occurs through a double-displacement mechanism. The nucleophile active site attacks the C1' of nucleotide 34 to detach the guanine base from the RNA, forming a covalent enzyme-RNA intermediate. The proton acceptor active site deprotonates the incoming PreQ1, allowing a nucleophilic attack on the C1' of the ribose to form the product. After dissociation, two additional enzymatic reactions on the tRNA convert PreQ1 to queuine (Q), resulting in the hypermodified nucleoside queuosine (7-(((4,5-cis-dihydroxy-2-cyclopenten-1-yl)amino)methyl)-7-deazaguanosine). In Leptothrix cholodnii (strain ATCC 51168 / LMG 8142 / SP-6) (Leptothrix discophora (strain SP-6)), this protein is Queuine tRNA-ribosyltransferase.